The following is an 846-amino-acid chain: Translation initiation factor IF-2 (846 aa).

The segment at 94 to 263 is disordered; sequence QRSPEEIQAE…HGFQNPTGPV (170 aa). Residues 96–135 show a composition bias toward basic and acidic residues; the sequence is SPEEIQAEQKRELEERRAAENAARDKVEAEVRQRNEEQAR. Composition is skewed to low complexity over residues 136–148 and 158–176; these read RQAAGSTAAAPAP and AAPVAAPAPVVADAPASED. Composition is skewed to basic and acidic residues over residues 177 to 206 and 230 to 239; these read AAARAAERKKDETRRNESRTRDDDRRRGEA and TTDEESDGAR. Positions 240-253 are enriched in basic residues; it reads RGRGGKSKLKKRNQ. The tr-type G domain occupies 346–513; the sequence is SRAPVVTVMG…AVLLQAEILE (168 aa). The segment at 355-362 is G1; it reads GHVDHGKT. 355–362 is a binding site for GTP; the sequence is GHVDHGKT. The segment at 380 to 384 is G2; sequence GITQH. The segment at 401-404 is G3; the sequence is DTPG. GTP is bound by residues 401 to 405 and 455 to 458; these read DTPGH and NKID. A G4 region spans residues 455–458; that stretch reads NKID. Residues 491–493 form a G5 region; sequence SAK.

This sequence belongs to the TRAFAC class translation factor GTPase superfamily. Classic translation factor GTPase family. IF-2 subfamily.

The protein resides in the cytoplasm. One of the essential components for the initiation of protein synthesis. Protects formylmethionyl-tRNA from spontaneous hydrolysis and promotes its binding to the 30S ribosomal subunits. Also involved in the hydrolysis of GTP during the formation of the 70S ribosomal complex. In Pseudomonas putida (strain ATCC 700007 / DSM 6899 / JCM 31910 / BCRC 17059 / LMG 24140 / F1), this protein is Translation initiation factor IF-2.